The chain runs to 567 residues: Dihydroxy-acid dehydratase 1 (567 aa).

C57 contributes to the [2Fe-2S] cluster binding site. D89 is a binding site for Mg(2+). C130 lines the [2Fe-2S] cluster pocket. The Mg(2+) site is built by D131 and K132. The residue at position 132 (K132) is an N6-carboxylysine. C202 is a binding site for [2Fe-2S] cluster. E454 is a Mg(2+) binding site. The Proton acceptor role is filled by S480.

Belongs to the IlvD/Edd family. In terms of assembly, homodimer. [2Fe-2S] cluster serves as cofactor. Requires Mg(2+) as cofactor.

The enzyme catalyses (2R)-2,3-dihydroxy-3-methylbutanoate = 3-methyl-2-oxobutanoate + H2O. It carries out the reaction (2R,3R)-2,3-dihydroxy-3-methylpentanoate = (S)-3-methyl-2-oxopentanoate + H2O. It functions in the pathway amino-acid biosynthesis; L-isoleucine biosynthesis; L-isoleucine from 2-oxobutanoate: step 3/4. The protein operates within amino-acid biosynthesis; L-valine biosynthesis; L-valine from pyruvate: step 3/4. Functionally, functions in the biosynthesis of branched-chain amino acids. Catalyzes the dehydration of (2R,3R)-2,3-dihydroxy-3-methylpentanoate (2,3-dihydroxy-3-methylvalerate) into 2-oxo-3-methylpentanoate (2-oxo-3-methylvalerate) and of (2R)-2,3-dihydroxy-3-methylbutanoate (2,3-dihydroxyisovalerate) into 2-oxo-3-methylbutanoate (2-oxoisovalerate), the penultimate precursor to L-isoleucine and L-valine, respectively. In Aromatoleum aromaticum (strain DSM 19018 / LMG 30748 / EbN1) (Azoarcus sp. (strain EbN1)), this protein is Dihydroxy-acid dehydratase 1.